A 471-amino-acid chain; its full sequence is Secretogranin-3 (471 aa).

An N-terminal signal peptide occupies residues methionine 1 to alanine 22. 2 disordered regions span residues phenylalanine 23–tyrosine 72 and glutamate 86–lysine 105. Residues lysine 32–leucine 45 are compositionally biased toward basic and acidic residues. A Phosphoserine modification is found at serine 40. O-linked (Xyl...) (chondroitin sulfate) serine glycosylation occurs at serine 40. Residue asparagine 71 is glycosylated (N-linked (GlcNAc...) asparagine). The segment covering glutamate 86–serine 96 has biased composition (basic and acidic residues). An N-linked (GlcNAc...) asparagine glycan is attached at asparagine 353. The interval leucine 357–glutamate 409 is disordered. Basic and acidic residues predominate over residues glutamate 363 to glutamate 409. Serine 365 carries the phosphoserine modification.

Interacts with CHGA. Interacts with secretogranin II/SCG2. Interacts (via C-terminus) with CPE.

It is found in the cytoplasmic vesicle. The protein resides in the secretory vesicle. The protein localises to the secretory vesicle membrane. It localises to the secreted. In terms of biological role, member of the granin protein family that regulates the biogenesis of secretory granules. Acts as a sorting receptor for intragranular proteins including chromogranin A/CHGA. May also play a role in angiogenesis. Promotes endothelial proliferation, migration and tube formation through MEK/ERK signaling pathway. The chain is Secretogranin-3 (SCG3) from Bos taurus (Bovine).